The sequence spans 183 residues: Chromophore lyase CpcT/CpeT 4 (183 aa).

This sequence belongs to the CpcT/CpeT biliprotein lyase family.

Covalently attaches a chromophore to Cys residue(s) of phycobiliproteins. In Gloeobacter violaceus (strain ATCC 29082 / PCC 7421), this protein is Chromophore lyase CpcT/CpeT 4.